The following is a 234-amino-acid chain: Sperm flagellar protein 1 (234 aa).

The 106-residue stretch at 7-112 (EEALHQLYLW…VLIPLRQRLE (106 aa)) folds into the Calponin-homology (CH) domain. The tract at residues 181–234 (VLQIAEKEQELLASQETVQVLQMKVKRLEHLLQLKNVRIDDLSRRLQQAERKQR) is essential for homodimerization and microtubule bundling activity.

As to quaternary structure, homodimer. Interacts with actin, TJP1, CGN and CDH1. In terms of tissue distribution, expressed predominantly in the seminiferous epithelium of adult testis. Expressed in pillar cells of the organ of Corti (at protein level). Expressed in brain, kidney, lung and testis. Highly expressed in the trachea, lung and oviduct.

The protein resides in the cytoplasm. It localises to the cell projection. Its subcellular location is the cilium. The protein localises to the flagellum. It is found in the cytoskeleton. The protein resides in the cilium axoneme. It localises to the apical cell membrane. Its subcellular location is the basolateral cell membrane. The protein localises to the stress fiber. It is found in the microvillus. The protein resides in the lamellipodium. It localises to the filopodium. Microtubule-associated protein that promotes microtubule bundling and stabilizes microtubules against depolymerization in response to cold shock. Microtubule-associated protein involved in the stabilization of microtubules along the axis of migration during radial intercalation. Promotes the establishment and stabilization of an axis of microtubules required for the active migration of cells into the outer epithelium. Essential for ciliary central apparatus formation which requires both its microtubule-binding and bundling activities and for ciliary localization of HYDIN and SPAG6 in ependymal cilia. Binds actin in intestinal epithelial cells (IECs), essential for IECs survival and contributes to formation of filopodia and lamellipodia in migrating IECs. Regulates planar cell polarity signaling pathway and asymmetric microtubule accumulation in ciliated epithelia. This chain is Sperm flagellar protein 1 (Spef1), found in Mus musculus (Mouse).